Reading from the N-terminus, the 284-residue chain is MEMO1 family protein MmarC6_1286 (284 aa).

The protein belongs to the MEMO1 family.

The polypeptide is MEMO1 family protein MmarC6_1286 (Methanococcus maripaludis (strain C6 / ATCC BAA-1332)).